Here is a 559-residue protein sequence, read N- to C-terminus: Chromatin assembly factor 1 subunit B (559 aa).

WD repeat units lie at residues 11 to 54 (HNKE…DGKA), 64 to 103 (RHTK…EPEQ), 127 to 166 (GHLE…KISI), 169 to 208 (EHKS…VAFN), 228 to 279 (FHDD…RPIA), 299 to 340 (ELRP…PFGY), and 344 to 385 (IHYH…IPLK). Residues 386–559 (EKPVLNMRTP…NKGGTESLDP (174 aa)) are disordered. Phosphothreonine is present on T394. A Phosphoserine modification is found at S409. T419 is subject to Phosphothreonine. Phosphoserine is present on S429. The segment covering 430–444 (PGTTPPQARQAPAPT) has biased composition (low complexity). T433 carries the phosphothreonine modification. S458 bears the Phosphoserine mark. A compositionally biased stretch (polar residues) spans 469 to 495 (LQPSSQNTKAHPSRRVTLNTLQAWSKT). K494 bears the N6-acetyllysine mark. T495, T509, T521, and T531 each carry phosphothreonine. The segment covering 509-526 (TPPSSVPTSVISTPSTEE) has biased composition (low complexity). Position 538 is a phosphoserine (S538). Residues 541–552 (ELKRPRLDENKG) are compositionally biased toward basic and acidic residues.

This sequence belongs to the WD repeat HIR1 family. Subunit of the CAF-1 complex that contains RBBP4, CHAF1B and CHAF1A. CHAF1A binds directly to CHAF1B. Only minor amounts of RBBP4 are complexed with CHAF1A and CHAF1B in G1 phase. In G2 and S phase also monomeric CHAF1B is detected. Interacts with histones H3.1, H3.2 and H3.1t. Differentially phosphorylated during cell cycle. During mitosis the p60 subunit of inactive CAF-1 is hyperphosphorylated and displaced into the cytosol. Progressivly dephosphorylated from G1 to S and G2 phase. Phosphorylated p60 is recruited to chromatin undergoing DNA repair after UV irradiation in G1, S or G2 phases.

It localises to the nucleus. The protein localises to the cytoplasm. Its function is as follows. Acts as a component of the histone chaperone complex chromatin assembly factor 1 (CAF-1), which assembles histone octamers onto DNA during replication and repair. CAF-1 performs the first step of the nucleosome assembly process, bringing newly synthesized histones H3 and H4 to replicating DNA; histones H2A/H2B can bind to this chromatin precursor subsequent to DNA replication to complete the histone octamer. This is Chromatin assembly factor 1 subunit B from Homo sapiens (Human).